Here is an 86-residue protein sequence, read N- to C-terminus: Large ribosomal subunit protein uL23 (86 aa).

This sequence belongs to the universal ribosomal protein uL23 family. As to quaternary structure, part of the 50S ribosomal subunit. Contacts protein L29.

Functionally, binds to 23S rRNA. One of the proteins that surrounds the polypeptide exit tunnel on the outside of the ribosome. The chain is Large ribosomal subunit protein uL23 from Methanococcus aeolicus (strain ATCC BAA-1280 / DSM 17508 / OCM 812 / Nankai-3).